The following is a 138-amino-acid chain: Flagellar basal body rod protein FlgB (138 aa).

The protein belongs to the flagella basal body rod proteins family. The basal body constitutes a major portion of the flagellar organelle and consists of a number of rings mounted on a central rod. In Gram-negative bacteria, at least four rings, L, P, S and M are present, whereas Gram-positive bacteria lack the L and P rings. The rod consists of about 26 subunits of FlgG in the distal portion, and FlgB, FlgC and FlgF build up the proximal portion of the rod with about 6 subunits each. Rod assembly occurs by export via the flagellum-specific pathway of its constituent proteins and by their incorporation into the rod structure in the probable order of FlgB, FlgC, FlgF and FlgG. Another protein, FliE, also assembles onto the stable rod structure.

It localises to the bacterial flagellum basal body. Functionally, structural component of flagellum, the bacterial motility apparatus. Part of the rod structure of flagellar basal body. The protein is Flagellar basal body rod protein FlgB (flgB) of Escherichia coli (strain K12).